The sequence spans 254 residues: Ribosomal RNA small subunit methyltransferase J (254 aa).

S-adenosyl-L-methionine is bound by residues 107–108, 123–124, and aspartate 177; these read RD and ER.

Belongs to the methyltransferase superfamily. RsmJ family.

It is found in the cytoplasm. It catalyses the reaction guanosine(1516) in 16S rRNA + S-adenosyl-L-methionine = N(2)-methylguanosine(1516) in 16S rRNA + S-adenosyl-L-homocysteine + H(+). In terms of biological role, specifically methylates the guanosine in position 1516 of 16S rRNA. This Histophilus somni (strain 129Pt) (Haemophilus somnus) protein is Ribosomal RNA small subunit methyltransferase J.